A 416-amino-acid chain; its full sequence is POC1 centriolar protein homolog A (416 aa).

7 WD repeats span residues 16 to 55 (GHRDAITSLDFSPSGKQIASGSVDASVMVWNMKPQSRAYR), 58 to 97 (GHKDAVTCVQFSPSAHLLASSSRDKTVRLWVPSVKGESVL), 100 to 139 (AHTGSVRSVCFSADGQSLLTASDDQSIKLWSVHRQKIICT), 142 to 181 (EHNNWVRCARFSPDGQLMVSVSDDRTVKLWDASSRQLIHT), 184 to 223 (EPGGYSSYVDFHPSSTCIATASSDNTVRVWDIRTHTLLQH), 226 to 265 (VHSAAVNALSFHPSGNHLLTASSDSTLKILDLLEGRLLYT), and 268 to 307 (GHQGSASCVSFSRSGDQFASAGSDQQVMVWRTNFDSVDYS). The segment at 311–340 (QQKRDHRTPSAQASGAAGDPESRSGQKTEV) is disordered. The stretch at 380–412 (QLDVLTQTVAILEQRLTLTEDKLKECLEQQHQA) forms a coiled coil.

It belongs to the WD repeat POC1 family.

May play an important role in centriole assembly and/or stability and ciliogenesis. This chain is POC1 centriolar protein homolog A, found in Danio rerio (Zebrafish).